Here is a 308-residue protein sequence, read N- to C-terminus: tRNA pseudouridine synthase B (308 aa).

The active-site Nucleophile is Asp-47.

This sequence belongs to the pseudouridine synthase TruB family. Type 1 subfamily.

The catalysed reaction is uridine(55) in tRNA = pseudouridine(55) in tRNA. Responsible for synthesis of pseudouridine from uracil-55 in the psi GC loop of transfer RNAs. This is tRNA pseudouridine synthase B from Xanthomonas campestris pv. campestris (strain 8004).